A 327-amino-acid chain; its full sequence is Complex I intermediate-associated protein 30, mitochondrial (327 aa).

The N-terminal 24 residues, methionine 1–leucine 24, are a transit peptide targeting the mitochondrion. Residues proline 42 to histidine 63 are disordered. The segment covering arginine 53–histidine 63 has biased composition (basic and acidic residues). Serine 318 bears the Phosphoserine mark.

The protein belongs to the CIA30 family. Part of the mitochondrial complex I assembly/MCIA complex that comprises at least the core subunits TMEM126B, NDUFAF1, ECSIT and ACAD9 and complement subunits such as COA1 and TMEM186. Interacts with ECSIT. Interacts with ACAD9. At early stages of complex I assembly, it is found in intermediate subcomplexes that contain different subunits including NDUFB6, NDUFA6, NDUFA9, NDUFS3, NDUFS7, ND1, ND2 and ND3. Interacts with TMEM70 and TMEM242. As to expression, ubiquitous.

Its subcellular location is the mitochondrion. The protein localises to the mitochondrion matrix. Its function is as follows. As part of the MCIA complex, involved in the assembly of the mitochondrial complex I. The chain is Complex I intermediate-associated protein 30, mitochondrial from Homo sapiens (Human).